The sequence spans 401 residues: Ribosomal RNA dihydrouridine synthase (401 aa).

Residues A15, D34, N35, R41, G47, N52, V132, E371, and F384 each contribute to the FAD site.

Belongs to the BaiN/RdsA family. RdsA subfamily. FAD serves as cofactor.

The catalysed reaction is a 5,6-dihydrouridine in mRNA + NAD(+) = a uridine in mRNA + NADH + H(+). Functionally, catalyzes the synthesis of 5,6-dihydrouridine (D) at position 2449 in 23S rRNA. The polypeptide is Ribosomal RNA dihydrouridine synthase (Haemophilus influenzae (strain ATCC 51907 / DSM 11121 / KW20 / Rd)).